The primary structure comprises 263 residues: HTH-type transcriptional repressor NanR (263 aa).

The segment at 1–22 is disordered; sequence MGLMNAFDSQTEDSSPAIGRNL. One can recognise an HTH gntR-type domain in the interval 30–98; sequence KKLSEMVEEE…NGERARVSRP (69 aa). A DNA-binding region (H-T-H motif) is located at residues 58–77; the sequence is ERELMAFFNVGRPSVREALA.

Belongs to the NanR family.

In terms of biological role, transcriptional repressor that controls expression of the genes required for the catabolism of sialic acids. In Shigella dysenteriae serotype 1 (strain Sd197), this protein is HTH-type transcriptional repressor NanR.